The chain runs to 397 residues: Transaldolase (397 aa).

The Schiff-base intermediate with substrate role is filled by K136.

It belongs to the transaldolase family. Type 1 subfamily. Homodimer.

Its subcellular location is the cytoplasm. The catalysed reaction is D-sedoheptulose 7-phosphate + D-glyceraldehyde 3-phosphate = D-erythrose 4-phosphate + beta-D-fructose 6-phosphate. Its pathway is carbohydrate degradation; pentose phosphate pathway; D-glyceraldehyde 3-phosphate and beta-D-fructose 6-phosphate from D-ribose 5-phosphate and D-xylulose 5-phosphate (non-oxidative stage): step 2/3. In terms of biological role, transaldolase is important for the balance of metabolites in the pentose-phosphate pathway. This Synechococcus sp. (strain ATCC 27144 / PCC 6301 / SAUG 1402/1) (Anacystis nidulans) protein is Transaldolase.